Consider the following 264-residue polypeptide: uncharacterized protein (264 aa).

A signal peptide spans 1-22; the sequence is MKRKLTICLLIALIFYNGNAKA. The helical transmembrane segment at 227–247 threads the bilayer; it reads LLWVIITTGSIIITALTYVGY.

The protein resides in the membrane. This is an uncharacterized protein from Bacillus subtilis (strain 168).